Reading from the N-terminus, the 130-residue chain is Small ribosomal subunit protein uS8 (130 aa).

The protein belongs to the universal ribosomal protein uS8 family. As to quaternary structure, part of the 30S ribosomal subunit. Contacts proteins S5 and S12.

In terms of biological role, one of the primary rRNA binding proteins, it binds directly to 16S rRNA central domain where it helps coordinate assembly of the platform of the 30S subunit. The sequence is that of Small ribosomal subunit protein uS8 from Pseudomonas fluorescens (strain SBW25).